Here is an 88-residue protein sequence, read N- to C-terminus: Stannin (88 aa).

The Mitochondrial intermembrane portion of the chain corresponds to 1-10; it reads MSIMDHSPTT. Residues 11 to 31 traverse the membrane as a helical segment; sequence GVVTVIVILIAIAALGALILG. Over 32 to 88 the chain is Cytoplasmic; the sequence is CWCYLRLQRISQSEDEESIVGDGETKEPFLLVQYSAKGPCVERKAKLMTPNGPEVHG. The residue at position 49 (S49) is a Phosphoserine.

The protein belongs to the stannin family. In terms of assembly, monomer.

It is found in the mitochondrion outer membrane. Functionally, plays a role in the toxic effects of organotins. Plays a role in endosomal maturation. This is Stannin (SNN) from Homo sapiens (Human).